Here is a 342-residue protein sequence, read N- to C-terminus: Manganese-dependent ADP-ribose/CDP-alcohol diphosphatase (342 aa).

Met1 is subject to N-acetylmethionine. 7 residues coordinate Zn(2+): Asp25, Gln27, Asp74, Asn110, His241, His278, and His280.

Belongs to the ADPRibase-Mn family. Monomer. It depends on Mg(2+) as a cofactor.

The enzyme catalyses CDP-choline + H2O = phosphocholine + CMP + 2 H(+). It catalyses the reaction ADP-D-ribose + H2O = D-ribose 5-phosphate + AMP + 2 H(+). The catalysed reaction is CDP-glycerol + H2O = sn-glycerol 3-phosphate + CMP + 2 H(+). Its function is as follows. Hydrolyzes ADP-ribose, IDP-ribose, CDP-glycerol, CDP-choline and CDP-ethanolamine, but not other non-reducing ADP-sugars or CDP-glucose. May be involved in immune cell signaling as suggested by the second-messenger role of ADP-ribose, which activates TRPM2 as a mediator of oxidative/nitrosative stress. This is Manganese-dependent ADP-ribose/CDP-alcohol diphosphatase (ADPRM) from Homo sapiens (Human).